Consider the following 315-residue polypeptide: L-lactate dehydrogenase (315 aa).

NAD(+)-binding positions include V14, D35, Y67, and 81-82; that span reads GV. Residues Q84, R91, and 123 to 126 each bind substrate; that span reads NPVD. NAD(+) contacts are provided by residues 121-123 and S146; that span reads ASN. Substrate is bound at residue 151–154; that stretch reads DSAR. The active-site Proton acceptor is the H178. The residue at position 219 (Y219) is a Phosphotyrosine. Residue T228 participates in substrate binding.

The protein belongs to the LDH/MDH superfamily. LDH family. As to quaternary structure, homotetramer.

Its subcellular location is the cytoplasm. It carries out the reaction (S)-lactate + NAD(+) = pyruvate + NADH + H(+). Its pathway is fermentation; pyruvate fermentation to lactate; (S)-lactate from pyruvate: step 1/1. Functionally, catalyzes the conversion of lactate to pyruvate. This is L-lactate dehydrogenase from Malacoplasma penetrans (strain HF-2) (Mycoplasma penetrans).